The chain runs to 36 residues: Histone H1-like protein EM5 (36 aa).

An H15 domain is found at 1–36 (MITAAVGALKERGGSSRQAILKYIQANFKVQANPAA).

Belongs to the histone H1/H5 family. Sperm.

The protein localises to the nucleus. It is found in the chromosome. This Ensis minor (Razor shell) protein is Histone H1-like protein EM5.